Here is a 167-residue protein sequence, read N- to C-terminus: Transmembrane protein 229B (167 aa).

Over Met1–Tyr14 the chain is Cytoplasmic. The chain crosses the membrane as a helical span at residues Leu15–Val35. At Asn36–Lys40 the chain is on the extracellular side. A helical membrane pass occupies residues Phe41–Glu61. Residues Lys62–His72 are Cytoplasmic-facing. A helical membrane pass occupies residues Ile73–Leu93. The Extracellular portion of the chain corresponds to Ile94–Asp109. Residues Phe110–Ile130 traverse the membrane as a helical segment. Over Met131–Asp167 the chain is Cytoplasmic.

Belongs to the TMEM229 family.

It is found in the membrane. The chain is Transmembrane protein 229B (TMEM229B) from Gallus gallus (Chicken).